Here is a 203-residue protein sequence, read N- to C-terminus: MRGTLYIVAAPSGAGKSSIVNATLARDPKIALSISFTSRAPRPGERHSEHYHFVSAEEFQGMIAAGDFFEYALVHGDWKGTARQSVEPQLAAGHDVLLEIDWQGARQVRQKVPDAVSVFILPPSRQALDERMRKRGQDSEDVMAQRLAAAREEMLHFEEFDYVIINETFDTAVSEMCAIFTASRLRRQAQQQRHAGLIQALLD.

The Guanylate kinase-like domain occupies 3–181; the sequence is GTLYIVAAPS…AVSEMCAIFT (179 aa). 10 to 17 contacts ATP; sequence APSGAGKS.

It belongs to the guanylate kinase family.

It is found in the cytoplasm. It carries out the reaction GMP + ATP = GDP + ADP. Essential for recycling GMP and indirectly, cGMP. The protein is Guanylate kinase of Xanthomonas oryzae pv. oryzae (strain MAFF 311018).